A 51-amino-acid chain; its full sequence is Large ribosomal subunit protein bL33 (51 aa).

The interval 1–21 (MRDKIKLESSAGTGHFYTTTK) is disordered. The segment covering 10–20 (SAGTGHFYTTT) has biased composition (polar residues).

The protein belongs to the bacterial ribosomal protein bL33 family.

The chain is Large ribosomal subunit protein bL33 (rpmG) from Neisseria meningitidis serogroup A / serotype 4A (strain DSM 15465 / Z2491).